Consider the following 68-residue polypeptide: Pleurocidin (68 aa).

The N-terminal stretch at 1–22 (MKFTATFLMMAIFVLMVEPGEC) is a signal peptide. The propeptide occupies 48–68 (GDKQELNKRAVDEDPNVIVFE).

It belongs to the pleurocidin family. Goblet cells.

Its subcellular location is the secreted. It is found in the membrane. Functionally, antimicrobial peptide with potent activity against Gram-positive and Gram-negative bacteria. Activity against E.coli and B.subtilis. Weaker activity against L.mucor, s.marcescens and P.aeruginosa. May play a role in innate host defense. The sequence is that of Pleurocidin (ple1) from Pseudopleuronectes americanus (Winter flounder).